Here is a 681-residue protein sequence, read N- to C-terminus: Transferrin (681 aa).

The N-terminal stretch at 1 to 18 is a signal peptide; the sequence is MALKLLTLIALTCAAANA. Transferrin-like domains follow at residues 23–364 and 371–676; these read YKLC…ERGH and VRLC…DVIS. Disulfide bonds link Cys26–Cys60 and Cys35–Cys51. Asp75 and Tyr108 together coordinate Fe(3+). Intrachain disulfides connect Cys132/Cys228, Cys181/Cys207, Cys204/Cys213, and Cys271/Cys284. Hydrogencarbonate-binding residues include Thr134, Arg138, Val140, and Gly141. N-linked (GlcNAc...) asparagine glycosylation is present at Asn218. Tyr222 is a Fe(3+) binding site. Asn355 carries N-linked (GlcNAc...) asparagine glycosylation. Disulfide bonds link Cys374–Cys411 and Cys384–Cys402. Asn418 carries an N-linked (GlcNAc...) asparagine glycan. 3 disulfide bridges follow: Cys478-Cys551, Cys506-Cys678, and Cys579-Cys596.

This sequence belongs to the transferrin family.

The protein resides in the secreted. In terms of biological role, transferrins are iron binding transport proteins which bind Fe(3+) ion in association with the binding of an anion, usually bicarbonate. This transferrin binds only one Fe(3+) ion per protein molecule. The polypeptide is Transferrin (Manduca sexta (Tobacco hawkmoth)).